We begin with the raw amino-acid sequence, 384 residues long: Spermidine/putrescine import ATP-binding protein PotA (384 aa).

Residues 6–238 (ITFNNVSKTF…PINHFVANFI (233 aa)) form the ABC transporter domain. 40–47 (GASGSGKS) is a binding site for ATP.

This sequence belongs to the ABC transporter superfamily. Spermidine/putrescine importer (TC 3.A.1.11.1) family. In terms of assembly, the complex is composed of two ATP-binding proteins (PotA), two transmembrane proteins (PotB and PotC) and a solute-binding protein (PotD).

Its subcellular location is the cell membrane. The enzyme catalyses ATP + H2O + polyamine-[polyamine-binding protein]Side 1 = ADP + phosphate + polyamineSide 2 + [polyamine-binding protein]Side 1.. In terms of biological role, part of the ABC transporter complex PotABCD involved in spermidine/putrescine import. Responsible for energy coupling to the transport system. The chain is Spermidine/putrescine import ATP-binding protein PotA from Streptococcus pyogenes serotype M6 (strain ATCC BAA-946 / MGAS10394).